The chain runs to 419 residues: CinA-like protein (419 aa).

This sequence belongs to the CinA family.

In Acaryochloris marina (strain MBIC 11017), this protein is CinA-like protein.